A 301-amino-acid polypeptide reads, in one-letter code: tRNA pseudouridine synthase B (301 aa).

Catalysis depends on Asp38, which acts as the Nucleophile.

The protein belongs to the pseudouridine synthase TruB family. Type 1 subfamily.

It catalyses the reaction uridine(55) in tRNA = pseudouridine(55) in tRNA. In terms of biological role, responsible for synthesis of pseudouridine from uracil-55 in the psi GC loop of transfer RNAs. This is tRNA pseudouridine synthase B from Clostridioides difficile (strain 630) (Peptoclostridium difficile).